The chain runs to 255 residues: 5'-nucleotidase SurE (255 aa).

A divalent metal cation-binding residues include aspartate 8, aspartate 9, serine 40, and asparagine 93.

The protein belongs to the SurE nucleotidase family. Requires a divalent metal cation as cofactor.

The protein localises to the cytoplasm. The enzyme catalyses a ribonucleoside 5'-phosphate + H2O = a ribonucleoside + phosphate. In terms of biological role, nucleotidase that shows phosphatase activity on nucleoside 5'-monophosphates. The sequence is that of 5'-nucleotidase SurE from Rhodopseudomonas palustris (strain BisB18).